We begin with the raw amino-acid sequence, 140 residues long: ATP synthase epsilon chain (140 aa).

The protein belongs to the ATPase epsilon chain family. In terms of assembly, F-type ATPases have 2 components, CF(1) - the catalytic core - and CF(0) - the membrane proton channel. CF(1) has five subunits: alpha(3), beta(3), gamma(1), delta(1), epsilon(1). CF(0) has three main subunits: a, b and c.

The protein localises to the cell inner membrane. Produces ATP from ADP in the presence of a proton gradient across the membrane. The polypeptide is ATP synthase epsilon chain (Thermodesulfovibrio yellowstonii (strain ATCC 51303 / DSM 11347 / YP87)).